A 144-amino-acid polypeptide reads, in one-letter code: uncharacterized protein (144 aa).

Positions 98–127 (PLADGATVDSQASENGEKEAQPTPPKEGLL) are disordered.

This is an uncharacterized protein from Aedes vexans (Inland floodwater mosquito).